A 376-amino-acid polypeptide reads, in one-letter code: MKKIILVAGGTGGHFFPAVALGEELIKRGYEVHFITDLRCKQYIKQDMKVIFHILDLKRSGNIFLFLPRLSIAVLKAIKLLYNMKPSVTVGFGGYPVIAPMFAAIFLRVPIIIHEQNSYLGKVNKFFASFAKKIAISYEKIKNLPEFAKSKIVVTGGVVRENIRELKVIEMSSRGLTTGSKKSLIKALDSVVKPRNDKLFTIFIFGGSQGAKLFSELIPASIQFLMQKQPSLELNIIQQAALDDQVKIKDIYSKLNITYEFAEFFDNMALQYKEADLVISRAGASTIEELTYIGLPAIFIPLPSAADNHQYYNAQLLEDEKTGWCLEQNNISAGKLADKILELISNPKILEDASQNLLKRRKEGHKLLSNLIEEVI.

UDP-N-acetyl-alpha-D-glucosamine-binding positions include threonine 11–glycine 13, asparagine 117, arginine 160, serine 208, and glutamine 310.

Belongs to the glycosyltransferase 28 family. MurG subfamily.

Its subcellular location is the cell inner membrane. The enzyme catalyses di-trans,octa-cis-undecaprenyl diphospho-N-acetyl-alpha-D-muramoyl-L-alanyl-D-glutamyl-meso-2,6-diaminopimeloyl-D-alanyl-D-alanine + UDP-N-acetyl-alpha-D-glucosamine = di-trans,octa-cis-undecaprenyl diphospho-[N-acetyl-alpha-D-glucosaminyl-(1-&gt;4)]-N-acetyl-alpha-D-muramoyl-L-alanyl-D-glutamyl-meso-2,6-diaminopimeloyl-D-alanyl-D-alanine + UDP + H(+). The protein operates within cell wall biogenesis; peptidoglycan biosynthesis. In terms of biological role, cell wall formation. Catalyzes the transfer of a GlcNAc subunit on undecaprenyl-pyrophosphoryl-MurNAc-pentapeptide (lipid intermediate I) to form undecaprenyl-pyrophosphoryl-MurNAc-(pentapeptide)GlcNAc (lipid intermediate II). The polypeptide is UDP-N-acetylglucosamine--N-acetylmuramyl-(pentapeptide) pyrophosphoryl-undecaprenol N-acetylglucosamine transferase (Rickettsia africae (strain ESF-5)).